We begin with the raw amino-acid sequence, 293 residues long: Homoserine kinase (293 aa).

83-93 contributes to the ATP binding site; that stretch reads PITRGMGSSSA.

This sequence belongs to the GHMP kinase family. Homoserine kinase subfamily.

The protein localises to the cytoplasm. The enzyme catalyses L-homoserine + ATP = O-phospho-L-homoserine + ADP + H(+). The protein operates within amino-acid biosynthesis; L-threonine biosynthesis; L-threonine from L-aspartate: step 4/5. Functionally, catalyzes the ATP-dependent phosphorylation of L-homoserine to L-homoserine phosphate. The chain is Homoserine kinase from Helicobacter pylori (strain J99 / ATCC 700824) (Campylobacter pylori J99).